The sequence spans 262 residues: Tropinone reductase homolog At2g30670 (262 aa).

13–37 (LVTGGASGIGHAIVEELAGLGARIY) contacts NADP(+). Serine 146 lines the substrate pocket. Tyrosine 159 serves as the catalytic Proton acceptor.

Belongs to the short-chain dehydrogenases/reductases (SDR) family. SDR65C subfamily.

The chain is Tropinone reductase homolog At2g30670 from Arabidopsis thaliana (Mouse-ear cress).